The chain runs to 817 residues: Ribonuclease R 1 (817 aa).

One can recognise an RNB domain in the interval 259 to 584; it reads RVDYRNEITF…DLLVHRLIRE (326 aa). The S1 motif domain occupies 637-717; that stretch reads GEEYEGIIAS…MTGEIDFEYL (81 aa). The disordered stretch occupies residues 728–817; it reads AKAKKKPDHK…DGRKKPHKRG (90 aa). Basic residues predominate over residues 729-742; the sequence is KAKKKPDHKGRKKS. Composition is skewed to basic and acidic residues over residues 767–777 and 795–810; these read RRADEKFEFDK and KFTD…TDGR.

The protein belongs to the RNR ribonuclease family. RNase R subfamily.

The protein localises to the cytoplasm. It catalyses the reaction Exonucleolytic cleavage in the 3'- to 5'-direction to yield nucleoside 5'-phosphates.. Functionally, 3'-5' exoribonuclease that releases 5'-nucleoside monophosphates and is involved in maturation of structured RNAs. The protein is Ribonuclease R 1 (rnr1) of Lactococcus lactis subsp. lactis (strain IL1403) (Streptococcus lactis).